A 266-amino-acid polypeptide reads, in one-letter code: Dihydropteroate synthase (266 aa).

The 249-residue stretch at 12–260 folds into the Pterin-binding domain; it reads AAIMGILNVT…DVKANQDIVA (249 aa). A Mg(2+)-binding site is contributed by asparagine 19. (7,8-dihydropterin-6-yl)methyl diphosphate-binding positions include threonine 59, aspartate 93, asparagine 112, aspartate 176, lysine 212, and 248–250; that span reads RVH.

The protein belongs to the DHPS family. In terms of assembly, homodimer or homotrimer. Mg(2+) is required as a cofactor.

It catalyses the reaction (7,8-dihydropterin-6-yl)methyl diphosphate + 4-aminobenzoate = 7,8-dihydropteroate + diphosphate. It participates in cofactor biosynthesis; tetrahydrofolate biosynthesis; 7,8-dihydrofolate from 2-amino-4-hydroxy-6-hydroxymethyl-7,8-dihydropteridine diphosphate and 4-aminobenzoate: step 1/2. Catalyzes the condensation of para-aminobenzoate (pABA) with 6-hydroxymethyl-7,8-dihydropterin diphosphate (DHPt-PP) to form 7,8-dihydropteroate (H2Pte), the immediate precursor of folate derivatives. This chain is Dihydropteroate synthase (folP), found in Streptococcus pyogenes serotype M6 (strain ATCC BAA-946 / MGAS10394).